Here is a 55-residue protein sequence, read N- to C-terminus: Ovomucoid (55 aa).

The 51-residue stretch at 5–55 (VDCSEHPKPACTLDYRPICGSDSKTYSNKCDFCNAVMDSNGTLTLSHFGKC) folds into the Kazal-like domain. 3 cysteine pairs are disulfide-bonded: C7–C37, C15–C34, and C23–C55. N44 is a glycosylation site (N-linked (GlcNAc...) asparagine).

The protein resides in the secreted. This chain is Ovomucoid, found in Dacelo novaeguineae (Laughing kookaburra).